We begin with the raw amino-acid sequence, 415 residues long: Adipocyte plasma membrane-associated protein (415 aa).

Residues 1–30 are disordered; the sequence is MNEAEGLRQRRPLRPQVITEDSPAQEAKEG. Residues 1-39 are Cytoplasmic-facing; that stretch reads MNEAEGLRQRRPLRPQVITEDSPAQEAKEGSAYSSKVFR. Residues 40-60 form a helical membrane-spanning segment; that stretch reads VTFLTLAASLAVPLLGATVLL. Residues 61-412 are Extracellular-facing; sequence DCPIDPQPIS…RSPFICRLNL (352 aa). Residue Asn-159 is glycosylated (N-linked (GlcNAc...) asparagine).

The protein belongs to the strictosidine synthase family.

The protein localises to the membrane. This chain is Adipocyte plasma membrane-associated protein (APMAP), found in Gallus gallus (Chicken).